The chain runs to 326 residues: Phospho-N-acetylmuramoyl-pentapeptide-transferase (326 aa).

The next 10 helical transmembrane spans lie at 3 to 23 (LPTK…PYFI), 51 to 71 (TPTM…LFWV), 77 to 97 (ILLL…DDYL), 113 to 133 (ILIQ…YFTE), 143 to 163 (GIMI…VVGS), 175 to 195 (GLAA…AYMT), 199 to 219 (ISVI…LWFN), 225 to 245 (IFMG…TSVL), 250 to 270 (VLFA…VIQV), and 306 to 326 (IVIK…AFLL).

Belongs to the glycosyltransferase 4 family. MraY subfamily. Mg(2+) is required as a cofactor.

The protein resides in the cell membrane. It carries out the reaction UDP-N-acetyl-alpha-D-muramoyl-L-alanyl-gamma-D-glutamyl-meso-2,6-diaminopimeloyl-D-alanyl-D-alanine + di-trans,octa-cis-undecaprenyl phosphate = di-trans,octa-cis-undecaprenyl diphospho-N-acetyl-alpha-D-muramoyl-L-alanyl-D-glutamyl-meso-2,6-diaminopimeloyl-D-alanyl-D-alanine + UMP. Its pathway is cell wall biogenesis; peptidoglycan biosynthesis. In terms of biological role, catalyzes the initial step of the lipid cycle reactions in the biosynthesis of the cell wall peptidoglycan: transfers peptidoglycan precursor phospho-MurNAc-pentapeptide from UDP-MurNAc-pentapeptide onto the lipid carrier undecaprenyl phosphate, yielding undecaprenyl-pyrophosphoryl-MurNAc-pentapeptide, known as lipid I. This Wolbachia sp. subsp. Brugia malayi (strain TRS) protein is Phospho-N-acetylmuramoyl-pentapeptide-transferase.